The chain runs to 524 residues: MAARCSIAFMIMASCLSVVVSGGLPGDLFALSVASKLRVDRNSTARASSDFGRIVAAAPEAVLHPATPAEIAELVRFSASSPSPFPVAPRGQGHSARGQSLAPGGVVVDMRALASRRGRVNVSAGAAPYVDAGGEQLWADVLRATLEHGLAPRVWTDYLRITVAGTLSNAGIGGQAFRHGPQIANVLELDVITGTGDMVTCSRDKDSDLFFAVLGGLGQFGIITRARIGLMPAPKRVRWVRLAYSDVATFTKDQELLISKRASEAGFDYVEGQVQLNRTLTEGPKSTPFFSSSDIGRLAGLASKSVSGVIYVIEGTMYYNESTSTTMDQKLESILGQLSFEEGFVFTKDVRYVQFLDRVREEERVLRSIGMWDVPHPWLNLFVPRSRILDFDAGVFKGVFAGANPVGVILMYPMNTNMWDDCMMAVASDDDVFYAVGLLRSAAVIGDVERLEKENEAVLAFCHNEDIGCKQYLPYYTSQDGWQRHFGAKWSRVADLKAKYDPHRILSPGQRIFSSPASMVVVSM.

The N-terminal stretch at 1–22 (MAARCSIAFMIMASCLSVVVSG) is a signal peptide. N-linked (GlcNAc...) asparagine glycosylation is present at Asn-42. The FAD-binding PCMH-type domain maps to 55–233 (VAAAPEAVLH…TRARIGLMPA (179 aa)). 2 residues coordinate FAD: Gly-91 and Gly-93. At His-94 the chain carries Pros-8alpha-FAD histidine. Positions 95 and 99 each coordinate FAD. Asn-121 carries an N-linked (GlcNAc...) asparagine glycan. 5 residues coordinate FAD: Asp-157, Thr-162, Ser-168, Ile-172, and Ile-223. Residues Asn-277 and Asn-320 are each glycosylated (N-linked (GlcNAc...) asparagine). Positions 472, 507, and 510 each coordinate FAD.

This sequence belongs to the oxygen-dependent FAD-linked oxidoreductase family. As to quaternary structure, monomer. It depends on FAD as a cofactor.

It is found in the secreted. Its subcellular location is the extracellular space. The catalysed reaction is N(6)-dimethylallyladenine + A + H2O = 3-methyl-2-butenal + adenine + AH2. In terms of biological role, catalyzes the oxidation of cytokinins, a family of N(6)-substituted adenine derivatives that are plant hormones, where the substituent is an isopentenyl group. This is Cytokinin dehydrogenase 7 (CKX7) from Oryza sativa subsp. japonica (Rice).